A 36-amino-acid chain; its full sequence is Histone H1-like protein EM5 (36 aa).

In terms of domain architecture, H15 spans 1 to 36; the sequence is MITAAVGALKERGGSSRQAILKYIQANFKVQANPAA.

Belongs to the histone H1/H5 family. Sperm.

It is found in the nucleus. The protein resides in the chromosome. This chain is Histone H1-like protein EM5, found in Ensis minor (Razor shell).